Here is a 272-residue protein sequence, read N- to C-terminus: Type III pantothenate kinase (272 aa).

ATP is bound at residue 6–13 (DVRNTHTV). A substrate-binding site is contributed by 109-112 (GADR). D111 (proton acceptor) is an active-site residue. Position 131 (D131) interacts with K(+). An ATP-binding site is contributed by S134. T186 contributes to the substrate binding site.

It belongs to the type III pantothenate kinase family. Homodimer. The cofactor is NH4(+). It depends on K(+) as a cofactor.

Its subcellular location is the cytoplasm. It carries out the reaction (R)-pantothenate + ATP = (R)-4'-phosphopantothenate + ADP + H(+). It participates in cofactor biosynthesis; coenzyme A biosynthesis; CoA from (R)-pantothenate: step 1/5. Catalyzes the phosphorylation of pantothenate (Pan), the first step in CoA biosynthesis. In Mycobacterium marinum (strain ATCC BAA-535 / M), this protein is Type III pantothenate kinase.